The chain runs to 715 residues: Fatty acid oxidation complex subunit alpha (715 aa).

Positions 1–190 (MIYQGKAITV…KVGAVDAVVA (190 aa)) are enoyl-CoA hydratase/isomerase. Position 297 (Asp-297) interacts with substrate. Positions 312–715 (KDVKLAAVLG…MAKNGQKFFG (404 aa)) are 3-hydroxyacyl-CoA dehydrogenase. NAD(+) is bound by residues Met-325, Asp-344, 401 to 403 (VVE), Lys-408, and Ser-430. His-451 serves as the catalytic For 3-hydroxyacyl-CoA dehydrogenase activity. Position 454 (Asn-454) interacts with NAD(+). Residues Asn-501 and Tyr-660 each coordinate substrate.

In the N-terminal section; belongs to the enoyl-CoA hydratase/isomerase family. It in the C-terminal section; belongs to the 3-hydroxyacyl-CoA dehydrogenase family. As to quaternary structure, heterotetramer of two alpha chains (FadB) and two beta chains (FadA).

It catalyses the reaction a (3S)-3-hydroxyacyl-CoA + NAD(+) = a 3-oxoacyl-CoA + NADH + H(+). The enzyme catalyses a (3S)-3-hydroxyacyl-CoA = a (2E)-enoyl-CoA + H2O. The catalysed reaction is a 4-saturated-(3S)-3-hydroxyacyl-CoA = a (3E)-enoyl-CoA + H2O. It carries out the reaction (3S)-3-hydroxybutanoyl-CoA = (3R)-3-hydroxybutanoyl-CoA. It catalyses the reaction a (3Z)-enoyl-CoA = a 4-saturated (2E)-enoyl-CoA. The enzyme catalyses a (3E)-enoyl-CoA = a 4-saturated (2E)-enoyl-CoA. It functions in the pathway lipid metabolism; fatty acid beta-oxidation. Functionally, involved in the aerobic and anaerobic degradation of long-chain fatty acids via beta-oxidation cycle. Catalyzes the formation of 3-oxoacyl-CoA from enoyl-CoA via L-3-hydroxyacyl-CoA. It can also use D-3-hydroxyacyl-CoA and cis-3-enoyl-CoA as substrate. In Pseudomonas paraeruginosa (strain DSM 24068 / PA7) (Pseudomonas aeruginosa (strain PA7)), this protein is Fatty acid oxidation complex subunit alpha.